The sequence spans 226 residues: Ribonuclease 3 (226 aa).

Residues 6-128 (TNRLQKKLGY…LIGGVFLDSD (123 aa)) form the RNase III domain. Position 41 (Glu41) interacts with Mg(2+). Residue Asp45 is part of the active site. Mg(2+) contacts are provided by Asp114 and Glu117. Glu117 is a catalytic residue. A DRBM domain is found at 155–225 (DPKTRLQEYL…AEQALKLLEL (71 aa)).

It belongs to the ribonuclease III family. As to quaternary structure, homodimer. The cofactor is Mg(2+).

It is found in the cytoplasm. It carries out the reaction Endonucleolytic cleavage to 5'-phosphomonoester.. In terms of biological role, digests double-stranded RNA. Involved in the processing of primary rRNA transcript to yield the immediate precursors to the large and small rRNAs (23S and 16S). Processes some mRNAs, and tRNAs when they are encoded in the rRNA operon. Processes pre-crRNA and tracrRNA of type II CRISPR loci if present in the organism. The chain is Ribonuclease 3 from Sodalis glossinidius (strain morsitans).